The sequence spans 692 residues: Vacuolar amino acid transporter 3 (692 aa).

The span at 1-14 (MNGKEVSSGSGRTQ) shows a compositional bias: polar residues. The segment at 1–71 (MNGKEVSSGS…TGGLLKKPPL (71 aa)) is disordered. The segment covering 15–24 (SNNNKKNNNG) has biased composition (low complexity). A compositionally biased stretch (polar residues) spans 28 to 38 (GISHASGSPLT). A phosphoserine mark is found at Ser-59, Ser-119, and Ser-121. Disordered stretches follow at residues 135–170 (KWTN…SNRK) and 258–294 (DLSE…GRHP). A compositionally biased stretch (low complexity) spans 141 to 153 (PSSPSQYQYPSQP). Residues 154–167 (ALSTSIPSQAPSFS) are compositionally biased toward polar residues. Ser-165 bears the Phosphoserine mark. A compositionally biased stretch (acidic residues) spans 258-279 (DLSEEEEEEEETEEEPEEEALE). A run of 11 helical transmembrane segments spans residues 302–322 (AVLL…PKAF), 329–349 (FSAL…VSLI), 374–394 (FAIL…YTVF), 412–432 (GSIS…PLSL), 443–463 (ALIA…YSIY), 483–503 (WSLF…LIPI), 519–539 (AVMC…YAAF), 561–581 (VQLL…FPAI), 607–627 (YFRC…ANDL), 630–650 (FVSL…PPLL), and 665–685 (LLLD…TSWQ).

It belongs to the amino acid/polyamine transporter 2 family.

Its subcellular location is the vacuole membrane. Involved in amino acid efflux from the vacuole to the cytoplasm. Capable of transporting large neutral amino acids including tyrosine, glutamine, asparagine, isoleucine and leucine. This is Vacuolar amino acid transporter 3 (AVT3) from Saccharomyces cerevisiae (strain ATCC 204508 / S288c) (Baker's yeast).